Consider the following 42-residue polypeptide: Photosystem II reaction center protein J (42 aa).

The chain crosses the membrane as a helical span at residues 12–32; sequence LWFVGMIVGLAALGLLGIFFY.

This sequence belongs to the PsbJ family. As to quaternary structure, PSII is composed of 1 copy each of membrane proteins PsbA, PsbB, PsbC, PsbD, PsbE, PsbF, PsbH, PsbI, PsbJ, PsbK, PsbL, PsbM, PsbT, PsbX, PsbY, PsbZ, Psb30/Ycf12, at least 3 peripheral proteins of the oxygen-evolving complex and a large number of cofactors. It forms dimeric complexes.

The protein localises to the plastid. It localises to the chloroplast thylakoid membrane. Its function is as follows. One of the components of the core complex of photosystem II (PSII). PSII is a light-driven water:plastoquinone oxidoreductase that uses light energy to abstract electrons from H(2)O, generating O(2) and a proton gradient subsequently used for ATP formation. It consists of a core antenna complex that captures photons, and an electron transfer chain that converts photonic excitation into a charge separation. The polypeptide is Photosystem II reaction center protein J (Nephroselmis olivacea (Green alga)).